The sequence spans 144 residues: Ribosomal RNA large subunit methyltransferase H (144 aa).

Residues L63, G92, and 111–116 contribute to the S-adenosyl-L-methionine site; that span reads LSPMTF.

The protein belongs to the RNA methyltransferase RlmH family. Homodimer.

The protein localises to the cytoplasm. It carries out the reaction pseudouridine(1915) in 23S rRNA + S-adenosyl-L-methionine = N(3)-methylpseudouridine(1915) in 23S rRNA + S-adenosyl-L-homocysteine + H(+). Its function is as follows. Specifically methylates the pseudouridine at position 1915 (m3Psi1915) in 23S rRNA. The polypeptide is Ribosomal RNA large subunit methyltransferase H (Parasynechococcus marenigrum (strain WH8102)).